The primary structure comprises 252 residues: NAP1-related protein 2 (252 aa).

Positions 1–15 (MTAPADKGKKAKTDA) are enriched in basic and acidic residues. The interval 1–23 (MTAPADKGKKAKTDADGGAAEEN) is disordered. Positions 26 to 67 (IDGALVLSIEKLQEIQDELEKVNEEASDKVLEVEQKYSEIRR) form a coiled coil. A disordered region spans residues 222-252 (YFNNEAEELGEDDDEEGSDADEGEEDEEEEN). Acidic residues predominate over residues 226–252 (EAEELGEDDDEEGSDADEGEEDEEEEN).

This sequence belongs to the nucleosome assembly protein (NAP) family.

The protein resides in the nucleus. It is found in the cytoplasm. Functionally, acts as a histone H2A/H2B chaperone in nucleosome assembly. This is NAP1-related protein 2 from Oryza sativa subsp. indica (Rice).